We begin with the raw amino-acid sequence, 948 residues long: MCNHHPKHSHGNDTIRIRGARTHNLKNVDLDIPRHKLVVVTGLSGSGKSSLAFDTLYAEGQRRYVESLSAYARQFLQMMDKPDVDLIEGLSPAISIEQKSTSHNPRSTVGTVTEIHDYLRLLYARVGTPYCPEHKLPLSSQTVSQMVDAVLKLPEDTRVMILAPAVRERKGEFVDFFADLQAQGFARVRVDGEVYQLDEVPKLEKNIKHNIDVVIDRVKVKADIKQRLAESFETALRHGNERALAMEMDSGEEHWFSARFACPVCSYSLPELEPRLFSFNNPMGSCPTCDGLGNTNFFDPEKVVAHPELSLASGAIDGWDKRNQFYFQMIQSLARHYGFDVQAAWETLPAKIKKVVLHGSGKEVIDFTYLSERGTTFNRSHAFEGIIPNLERRYRETDSETVREKLREYQNHRACPSCGGARLRKEARYVYVSGEPLHEVSAWPLTKTHRFFETLDLDGNKKQIAEKILKEITERLGFLINVGLDYLNLSRSAETLSGGEAQRIRLASQIGSGLTGVMYVLDEPSIGLHQRDNDRLLATLKRLRDLGNSVIVVEHDEDAIREADFVVDMGPGAGEHGGNVLIADTPENVAKCENSVTGQYLSGKKSIAVPSERTPVNPGRMLVLKGARGNNLKNVTLELPLGLITCITGVSGSGKSTLINDTLAKITARELNRAQEEPAPYDDIRGLEHLDKVINVDQSPIGRTPRSNPATYTGLFTPIRELFASVPLSRERGYNVGRFSFNVKGGRCEACQGDGVIKVEMHFLPDVYVPCEVCHGKRYNRETLEIQYKGKNISQVLDMTVEEACEFFDAVPTVSRKLQTLMDVGLGYIRLGQSATTLSGGEAQRVKLALELSKRDTGRTLYILDEPTTGLHFADIALLLEVIGRLKGKGNSIVIIEHNLDVIKTADWIVDLGPEGGDGGGRIIASGSPEEVAKVKGSYTGKYLKNIL.

42–49 (GLSGSGKS) contributes to the ATP binding site. The segment at 262–289 (CPVCSYSLPELEPRLFSFNNPMGSCPTC) adopts a C4-type zinc-finger fold. 2 ABC transporter domains span residues 319 to 596 (WDKR…ENSV) and 616 to 945 (VNPG…KYLK). 649–656 (GVSGSGKS) provides a ligand contact to ATP. The C4-type zinc finger occupies 748-774 (CEACQGDGVIKVEMHFLPDVYVPCEVC).

It belongs to the ABC transporter superfamily. UvrA family. As to quaternary structure, forms a heterotetramer with UvrB during the search for lesions.

It is found in the cytoplasm. Its function is as follows. The UvrABC repair system catalyzes the recognition and processing of DNA lesions. UvrA is an ATPase and a DNA-binding protein. A damage recognition complex composed of 2 UvrA and 2 UvrB subunits scans DNA for abnormalities. When the presence of a lesion has been verified by UvrB, the UvrA molecules dissociate. In Neisseria meningitidis serogroup A / serotype 4A (strain DSM 15465 / Z2491), this protein is UvrABC system protein A.